Consider the following 387-residue polypeptide: Probable aminomethyltransferase, mitochondrial (387 aa).

3 residues coordinate substrate: Glu-219, Arg-248, and Tyr-385.

The protein belongs to the GcvT family. In terms of assembly, the glycine cleavage system is composed of four proteins: P, T, L and H.

It is found in the mitochondrion. The catalysed reaction is N(6)-[(R)-S(8)-aminomethyldihydrolipoyl]-L-lysyl-[protein] + (6S)-5,6,7,8-tetrahydrofolate = N(6)-[(R)-dihydrolipoyl]-L-lysyl-[protein] + (6R)-5,10-methylene-5,6,7,8-tetrahydrofolate + NH4(+). In terms of biological role, the glycine cleavage system catalyzes the degradation of glycine. The polypeptide is Probable aminomethyltransferase, mitochondrial (gcv1) (Schizosaccharomyces pombe (strain 972 / ATCC 24843) (Fission yeast)).